A 295-amino-acid chain; its full sequence is Glutamate 5-kinase (295 aa).

Position 9 (Lys-9) interacts with ATP. 3 residues coordinate substrate: Ser-49, Asp-136, and Asn-148. Residues 168-169 (TD) and 210-216 (TGGMLTK) each bind ATP.

Belongs to the glutamate 5-kinase family.

It localises to the cytoplasm. It carries out the reaction L-glutamate + ATP = L-glutamyl 5-phosphate + ADP. It functions in the pathway amino-acid biosynthesis; L-proline biosynthesis; L-glutamate 5-semialdehyde from L-glutamate: step 1/2. Functionally, catalyzes the transfer of a phosphate group to glutamate to form L-glutamate 5-phosphate. This is Glutamate 5-kinase from Neisseria gonorrhoeae (strain NCCP11945).